Reading from the N-terminus, the 750-residue chain is Coiled-coil domain-containing protein 142 (750 aa).

The interval 1 to 29 (MAQASRSGSLPPLVIVPPLRAQPGGTGEE) is disordered. Residues 87 to 110 (ALQRLRAVLLRLHREREQLLQARD) are a coiled coil. Residues 687 to 714 (LEPPLQPGTSPAQTGQLQSTLGGRGPSP) are disordered. The segment covering 693–707 (PGTSPAQTGQLQSTL) has biased composition (polar residues).

This is Coiled-coil domain-containing protein 142 (CCDC142) from Homo sapiens (Human).